We begin with the raw amino-acid sequence, 278 residues long: HTH-type transcriptional activator RhaS (278 aa).

One can recognise an HTH araC/xylS-type domain in the interval 174-272 (NHLIAWLEDH…GWSPREIRQG (99 aa)). DNA-binding regions (H-T-H motif) lie at residues 191-212 (EAIA…KQHT) and 239-262 (VTHI…RREF).

Binds DNA as a dimer.

Its subcellular location is the cytoplasm. In terms of biological role, activates expression of the rhaBAD and rhaT operons. This Escherichia fergusonii (strain ATCC 35469 / DSM 13698 / CCUG 18766 / IAM 14443 / JCM 21226 / LMG 7866 / NBRC 102419 / NCTC 12128 / CDC 0568-73) protein is HTH-type transcriptional activator RhaS.